The chain runs to 268 residues: MKRVALLVQYDGYHYSGWQKQKNATTVQEILESALFKITNHTVKTFAAGRTDAGVHASGQVVHFDIDSVIPGFSYSNILNNLLPSTIRILESVEVKNSWHACYSAVYRHYRYVINNGKFPNLFINNWSWHRYQKVLDEVLMLHASKTMEGEHDFFAFQKSGSNRRNSVTLIKNIDIKRVEDLILVDIKATGFLYGMVRLIVGQLVLVGEKKISSDIFIDRWVNKKKNDVKESAPAKGLCFVNAVYEENVFKKVNNNDFFPLFLINGFS.

Asp-52 functions as the Nucleophile in the catalytic mechanism. Substrate is bound at residue Tyr-110.

The protein belongs to the tRNA pseudouridine synthase TruA family. In terms of assembly, homodimer.

It carries out the reaction uridine(38/39/40) in tRNA = pseudouridine(38/39/40) in tRNA. Formation of pseudouridine at positions 38, 39 and 40 in the anticodon stem and loop of transfer RNAs. The chain is tRNA pseudouridine synthase A from Prochlorococcus marinus (strain MIT 9215).